The chain runs to 311 residues: Ribonuclease HIII (311 aa).

Positions 95-311 (MSIVGSDEVG…NTEKAFRLLK (217 aa)) constitute an RNase H type-2 domain. Residues D101, E102, and D206 each coordinate a divalent metal cation.

Belongs to the RNase HII family. RnhC subfamily. Requires Mn(2+) as cofactor. Mg(2+) is required as a cofactor.

It is found in the cytoplasm. The catalysed reaction is Endonucleolytic cleavage to 5'-phosphomonoester.. In terms of biological role, endonuclease that specifically degrades the RNA of RNA-DNA hybrids. This Bacillus thuringiensis subsp. konkukian (strain 97-27) protein is Ribonuclease HIII.